The primary structure comprises 263 residues: Aminoglycoside 3'-phosphotransferase (263 aa).

The Proton acceptor role is filled by aspartate 183.

It belongs to the aminoglycoside phosphotransferase family.

It catalyses the reaction kanamycin A + ATP = kanamycin 3'-phosphate + ADP + H(+). Functionally, resistance to kanamycin and structurally-related aminoglycosides, including amikacin. The protein is Aminoglycoside 3'-phosphotransferase (rph) of Streptomyces ribosidificus.